Here is a 195-residue protein sequence, read N- to C-terminus: Myelin basic protein (195 aa).

N-acetylalanine is present on A2. A phosphoserine mark is found at S8 and S13. Y15 bears the Phosphotyrosine mark. T18 carries the phosphothreonine modification. S20 is modified (phosphoserine). Residue T21 is modified to Phosphothreonine. Citrulline occurs at positions 26 and 32. T36 is modified (phosphothreonine). S41 is modified (phosphoserine). Omega-N-methylarginine is present on residues R44 and R50. Residues 45–79 are disordered; that stretch reads FFSGDRGAPKRGSGKVPWLKQSRSPLPSHARSRPG. S57 carries the phosphoserine modification. Position 92 is a phosphothreonine (T92). Y94 is modified (phosphotyrosine). A Phosphoserine modification is found at S101. T104, T119, and T122 each carry phosphothreonine. The interval 117–139 is disordered; it reads IVTPRTPPPSQGKGRGLSLSRFS. Deamidated glutamine is present on Q127. The residue at position 131 (R131) is an Omega-N-methylarginine; alternate. At R131 the chain carries Symmetric dimethylarginine; alternate. S139 bears the Phosphoserine mark. An N6-acetyllysine modification is found at K146. The residue at position 154 (R154) is a Citrulline. A Deamidated glutamine modification is found at Q172. The residue at position 184 (R184) is a Citrulline. Phosphoserine is present on S186. S190 bears the Phosphoserine; by UHMK1 mark. Residue R195 is modified to Citrulline.

The protein belongs to the myelin basic protein family. As to quaternary structure, homodimer. As in other animals, several charge isomers may be produced as a result of optional post-translational modifications, such as phosphorylation of serine or threonine residues, deamidation of glutamine or asparagine residues, citrullination and methylation of arginine residues. In terms of processing, arg-131 was found to be 44% monomethylated and 11% symmetrically dimethylated. Post-translationally, phosphorylated by TAOK2, VRK2, MAPK11, MAPK12, MAPK14 and MINK1. Proteolytically cleaved in B cell lysosomes by cathepsin CTSG which degrades the major immunogenic MBP epitope and prevents the activation of MBP-specific autoreactive T cells. In terms of tissue distribution, found in both the central and the peripheral nervous system.

It is found in the myelin membrane. Its function is as follows. Is, with PLP, the most abundant protein component of the myelin membrane in the CNS. Has a role in both the formation and stabilization of this compact multilayer arrangement of bilayers. Each splice variant and charge isomer may have a specialized function in the assembly of an optimized, biochemically functional myelin membrane. The polypeptide is Myelin basic protein (Mbp) (Rattus norvegicus (Rat)).